The primary structure comprises 196 residues: Late protein I196L (196 aa).

A run of 2 repeats spans residues 28–48 (SIYL…PTTS) and 49–70 (SNSL…TTTS). The stretch at 71–92 (SNYLTSAISTNISDKEEDTPFS) is one 3; approximate repeat.

Belongs to the asfivirus I196L family.

The sequence is that of Late protein I196L from African swine fever virus (isolate Warthog/Namibia/Wart80/1980) (ASFV).